We begin with the raw amino-acid sequence, 271 residues long: uncharacterized protein (271 aa).

The signal sequence occupies residues 1–22 (MIHSKRLKLCLCLIILSVFIGA). The N-palmitoyl cysteine moiety is linked to residue C23. The S-diacylglycerol cysteine moiety is linked to residue C23.

Belongs to the staphylococcal tandem lipoprotein family.

It localises to the cell membrane. This is an uncharacterized protein from Staphylococcus aureus (strain MW2).